Here is a 249-residue protein sequence, read N- to C-terminus: Octanoyltransferase (249 aa).

The interval 1–23 (MVNSPQNPRQDQRQDLDLTSFSA) is disordered. The BPL/LPL catalytic domain maps to 57–241 (GEAPELVWLL…AFEELFGPTR (185 aa)). Substrate contacts are provided by residues 95-102 (RGGQLTYH), 170-172 (AIG), and 183-185 (GIA). The Acyl-thioester intermediate role is filled by cysteine 201.

It belongs to the LipB family.

The protein resides in the cytoplasm. The catalysed reaction is octanoyl-[ACP] + L-lysyl-[protein] = N(6)-octanoyl-L-lysyl-[protein] + holo-[ACP] + H(+). The protein operates within protein modification; protein lipoylation via endogenous pathway; protein N(6)-(lipoyl)lysine from octanoyl-[acyl-carrier-protein]: step 1/2. Its function is as follows. Catalyzes the transfer of endogenously produced octanoic acid from octanoyl-acyl-carrier-protein onto the lipoyl domains of lipoate-dependent enzymes. Lipoyl-ACP can also act as a substrate although octanoyl-ACP is likely to be the physiological substrate. This Bradyrhizobium diazoefficiens (strain JCM 10833 / BCRC 13528 / IAM 13628 / NBRC 14792 / USDA 110) protein is Octanoyltransferase.